We begin with the raw amino-acid sequence, 89 residues long: Small ribosomal subunit protein bS20 (89 aa).

The protein belongs to the bacterial ribosomal protein bS20 family.

Binds directly to 16S ribosomal RNA. The protein is Small ribosomal subunit protein bS20 of Wolbachia sp. subsp. Drosophila simulans (strain wRi).